The primary structure comprises 257 residues: UPF0246 protein KPK_4750 (257 aa).

This sequence belongs to the UPF0246 family.

This is UPF0246 protein KPK_4750 from Klebsiella pneumoniae (strain 342).